Consider the following 98-residue polypeptide: Aspartyl/glutamyl-tRNA(Asn/Gln) amidotransferase subunit C (98 aa).

Positions 75 to 98 are disordered; it reads AQALSGAPAQEQQRFKVPQILGED.

The protein belongs to the GatC family. Heterotrimer of A, B and C subunits.

The enzyme catalyses L-glutamyl-tRNA(Gln) + L-glutamine + ATP + H2O = L-glutaminyl-tRNA(Gln) + L-glutamate + ADP + phosphate + H(+). It catalyses the reaction L-aspartyl-tRNA(Asn) + L-glutamine + ATP + H2O = L-asparaginyl-tRNA(Asn) + L-glutamate + ADP + phosphate + 2 H(+). In terms of biological role, allows the formation of correctly charged Asn-tRNA(Asn) or Gln-tRNA(Gln) through the transamidation of misacylated Asp-tRNA(Asn) or Glu-tRNA(Gln) in organisms which lack either or both of asparaginyl-tRNA or glutaminyl-tRNA synthetases. The reaction takes place in the presence of glutamine and ATP through an activated phospho-Asp-tRNA(Asn) or phospho-Glu-tRNA(Gln). The chain is Aspartyl/glutamyl-tRNA(Asn/Gln) amidotransferase subunit C from Streptomyces griseus subsp. griseus (strain JCM 4626 / CBS 651.72 / NBRC 13350 / KCC S-0626 / ISP 5235).